The following is an 89-amino-acid chain: YcgL domain-containing protein Asuc_1390 (89 aa).

In terms of domain architecture, YcgL spans 1-85; that stretch reads MLCAIYKSKK…KDDWLFTIEK (85 aa).

In Actinobacillus succinogenes (strain ATCC 55618 / DSM 22257 / CCUG 43843 / 130Z), this protein is YcgL domain-containing protein Asuc_1390.